Consider the following 482-residue polypeptide: Ribosomal protein uS12 methylthiotransferase RimO (482 aa).

An MTTase N-terminal domain is found at 2 to 115 (MKVHIITLGC…IAEVVETFQP (114 aa)). [4Fe-4S] cluster is bound by residues Cys11, Cys47, Cys79, Cys177, Cys181, and Cys184. Residues 163–394 (RAVGPSAYLK…MRLQQRISRE (232 aa)) form the Radical SAM core domain. Positions 397-466 (RRWLGRVVRV…DYDLWGDVVG (70 aa)) constitute a TRAM domain.

Belongs to the methylthiotransferase family. RimO subfamily. [4Fe-4S] cluster is required as a cofactor.

The protein resides in the cytoplasm. The enzyme catalyses L-aspartate(89)-[ribosomal protein uS12]-hydrogen + (sulfur carrier)-SH + AH2 + 2 S-adenosyl-L-methionine = 3-methylsulfanyl-L-aspartate(89)-[ribosomal protein uS12]-hydrogen + (sulfur carrier)-H + 5'-deoxyadenosine + L-methionine + A + S-adenosyl-L-homocysteine + 2 H(+). Its function is as follows. Catalyzes the methylthiolation of an aspartic acid residue of ribosomal protein uS12. This is Ribosomal protein uS12 methylthiotransferase RimO from Roseiflexus castenholzii (strain DSM 13941 / HLO8).